Consider the following 131-residue polypeptide: Arsenate reductase (131 aa).

Active-site nucleophile residues include C10, C82, and C89. 2 disulfide bridges follow: C10-C82 and C82-C89.

Belongs to the low molecular weight phosphotyrosine protein phosphatase family. Thioredoxin-coupled ArsC subfamily.

It localises to the cytoplasm. It carries out the reaction arsenate + [thioredoxin]-dithiol + H(+) = arsenite + [thioredoxin]-disulfide + H2O. Catalyzes the reduction of arsenate [As(V)] to arsenite [As(III)]. This Staphylococcus aureus (strain N315) protein is Arsenate reductase.